The chain runs to 478 residues: Ribulose bisphosphate carboxylase large chain (478 aa).

Residues 1–2 constitute a propeptide that is removed on maturation; the sequence is MS. Position 3 is an N-acetylproline (Pro-3). Lys-14 carries the post-translational modification N6,N6,N6-trimethyllysine. Substrate contacts are provided by Asn-123 and Thr-173. Lys-175 serves as the catalytic Proton acceptor. Residue Lys-177 participates in substrate binding. Positions 201, 203, and 204 each coordinate Mg(2+). Lys-201 bears the N6-carboxylysine mark. His-294 functions as the Proton acceptor in the catalytic mechanism. Substrate is bound by residues Arg-295, His-327, and Ser-379.

Belongs to the RuBisCO large chain family. Type I subfamily. As to quaternary structure, heterohexadecamer of 8 large chains and 8 small chains; disulfide-linked. The disulfide link is formed within the large subunit homodimers. Mg(2+) is required as a cofactor. Post-translationally, the disulfide bond which can form in the large chain dimeric partners within the hexadecamer appears to be associated with oxidative stress and protein turnover.

It is found in the plastid. It localises to the chloroplast. The catalysed reaction is 2 (2R)-3-phosphoglycerate + 2 H(+) = D-ribulose 1,5-bisphosphate + CO2 + H2O. It catalyses the reaction D-ribulose 1,5-bisphosphate + O2 = 2-phosphoglycolate + (2R)-3-phosphoglycerate + 2 H(+). Its function is as follows. RuBisCO catalyzes two reactions: the carboxylation of D-ribulose 1,5-bisphosphate, the primary event in carbon dioxide fixation, as well as the oxidative fragmentation of the pentose substrate in the photorespiration process. Both reactions occur simultaneously and in competition at the same active site. The sequence is that of Ribulose bisphosphate carboxylase large chain from Lemna minor (Common duckweed).